A 217-amino-acid polypeptide reads, in one-letter code: Nucleoredoxin-like protein 1 (217 aa).

Positions 1-164 (MASLFSGRIL…AAELLDRSFL (164 aa)) constitute a Thioredoxin domain. The span at 188–204 (VDRDVGRERGRNGRDSG) shows a compositional bias: basic and acidic residues. The disordered stretch occupies residues 188–217 (VDRDVGRERGRNGRDSGDPQGDAGTRAELW).

It belongs to the nucleoredoxin family. As to quaternary structure, interacts with isoform 1 of BSG. In terms of tissue distribution, expressed in the retina (at protein level). Expressed predominantly by photoreceptors in both the inner and outer nuclear layer (at protein level). Not expressed in the testis, spleen, intestine, lung, cerebellum, or kidney.

It is found in the cell projection. Its subcellular location is the cilium. The protein resides in the photoreceptor outer segment. In terms of biological role, plays an important role in retinal cone photoreceptor survival. In association with glucose transporter SLC16A1/GLUT1 and BSG, promotes retinal cone survival by enhancing aerobic glycolysis and accelerating the entry of glucose into photoreceptors. May play a role in cone cell viability, slowing down cone degeneration, does not seem to play a role in degenerating rods. The chain is Nucleoredoxin-like protein 1 (Nxnl1) from Mus musculus (Mouse).